Here is a 115-residue protein sequence, read N- to C-terminus: Large ribosomal subunit protein uL22 (115 aa).

It belongs to the universal ribosomal protein uL22 family. In terms of assembly, part of the 50S ribosomal subunit.

In terms of biological role, this protein binds specifically to 23S rRNA; its binding is stimulated by other ribosomal proteins, e.g. L4, L17, and L20. It is important during the early stages of 50S assembly. It makes multiple contacts with different domains of the 23S rRNA in the assembled 50S subunit and ribosome. Functionally, the globular domain of the protein is located near the polypeptide exit tunnel on the outside of the subunit, while an extended beta-hairpin is found that lines the wall of the exit tunnel in the center of the 70S ribosome. The polypeptide is Large ribosomal subunit protein uL22 (Streptomyces griseus subsp. griseus (strain JCM 4626 / CBS 651.72 / NBRC 13350 / KCC S-0626 / ISP 5235)).